Reading from the N-terminus, the 921-residue chain is Glutamate receptor 3.7 (921 aa).

An N-terminal signal peptide occupies residues 1 to 25; sequence MGLGIDPSVAITALIVVILVVPMDC. The Extracellular portion of the chain corresponds to 26-580; sequence QRPQLVNIGA…WIFLRPFTSR (555 aa). 7 N-linked (GlcNAc...) asparagine glycosylation sites follow: Asn-214, Asn-300, Asn-330, Asn-369, Asn-396, Asn-478, and Asn-568. Residues 581-601 traverse the membrane as a helical segment; that stretch reads LWCVVLVSFLVIAVVIWILEH. At 602–608 the chain is on the cytoplasmic side; sequence RINEDFR. Residues 609-629 form a helical membrane-spanning segment; the sequence is GPPRRQLSTMLLFSFSTLFKR. Residues 630–640 lie on the Cytoplasmic side of the membrane; it reads NQEDTISNLAR. The helical transmembrane segment at 641–661 threads the bilayer; it reads LVMIVWLFLLMVLTASYTANL. Residues 662–822 are Extracellular-facing; the sequence is TSILTVQQLP…PEPNQLHLKS (161 aa). Residues 823-843 form a helical membrane-spanning segment; that stretch reads FKGLYLVCIAITVSAFLVFVL. Residues 844–921 lie on the Cytoplasmic side of the membrane; sequence RMIRQFVRYR…VQADTEVPRN (78 aa). Positions 896–921 are disordered; sequence FRRSDDSNNNPSHVGEVQADTEVPRN.

Belongs to the glutamate-gated ion channel (TC 1.A.10.1) family. As to quaternary structure, may form heteromers. Expressed predominantly in leaves and siliques. Also detected in roots.

The protein localises to the membrane. Functionally, glutamate-gated receptor that probably acts as a non-selective cation channel. May be involved in light-signal transduction and calcium homeostasis via the regulation of calcium influx into cells. This is Glutamate receptor 3.7 (GLR3.7) from Arabidopsis thaliana (Mouse-ear cress).